Consider the following 100-residue polypeptide: NADH-quinone oxidoreductase subunit K (100 aa).

Helical transmembrane passes span 4–24, 29–49, and 60–80; these read LSWY…GFVI, IVML…FASF, and IFVL…LAIV.

This sequence belongs to the complex I subunit 4L family. As to quaternary structure, NDH-1 is composed of 14 different subunits. Subunits NuoA, H, J, K, L, M, N constitute the membrane sector of the complex.

Its subcellular location is the cell inner membrane. The enzyme catalyses a quinone + NADH + 5 H(+)(in) = a quinol + NAD(+) + 4 H(+)(out). Functionally, NDH-1 shuttles electrons from NADH, via FMN and iron-sulfur (Fe-S) centers, to quinones in the respiratory chain. The immediate electron acceptor for the enzyme in this species is believed to be ubiquinone. Couples the redox reaction to proton translocation (for every two electrons transferred, four hydrogen ions are translocated across the cytoplasmic membrane), and thus conserves the redox energy in a proton gradient. The polypeptide is NADH-quinone oxidoreductase subunit K (Thermodesulfovibrio yellowstonii (strain ATCC 51303 / DSM 11347 / YP87)).